Here is a 485-residue protein sequence, read N- to C-terminus: Rhamnulokinase (485 aa).

Position 8-12 (8-12 (ASSGR)) interacts with ATP. Substrate contacts are provided by residues Gly78 and 231–233 (HDT). Asp232 serves as the catalytic Proton acceptor. Thr254 contributes to the ATP binding site. Substrate is bound at residue Asn291. Gln299 serves as a coordination point for ATP. A disulfide bond links Cys348 and Cys365. Position 397 (Gly397) interacts with ATP. Cys408 and Cys412 form a disulfide bridge.

It belongs to the rhamnulokinase family. The cofactor is Mg(2+).

The enzyme catalyses L-rhamnulose + ATP = L-rhamnulose 1-phosphate + ADP + H(+). The protein operates within carbohydrate degradation; L-rhamnose degradation; glycerone phosphate from L-rhamnose: step 2/3. Its function is as follows. Involved in the catabolism of L-rhamnose (6-deoxy-L-mannose). Catalyzes the transfer of the gamma-phosphate group from ATP to the 1-hydroxyl group of L-rhamnulose to yield L-rhamnulose 1-phosphate. In Yersinia pestis bv. Antiqua (strain Angola), this protein is Rhamnulokinase.